A 147-amino-acid polypeptide reads, in one-letter code: 3-dehydroquinate dehydratase (147 aa).

Y23 acts as the Proton acceptor in catalysis. N74, H80, and D87 together coordinate substrate. H100 acts as the Proton donor in catalysis. Substrate contacts are provided by residues 101 to 102 (LS) and R111.

It belongs to the type-II 3-dehydroquinase family. In terms of assembly, homododecamer.

The catalysed reaction is 3-dehydroquinate = 3-dehydroshikimate + H2O. It participates in metabolic intermediate biosynthesis; chorismate biosynthesis; chorismate from D-erythrose 4-phosphate and phosphoenolpyruvate: step 3/7. Catalyzes a trans-dehydration via an enolate intermediate. The polypeptide is 3-dehydroquinate dehydratase (Clostridium botulinum (strain Okra / Type B1)).